Here is a 276-residue protein sequence, read N- to C-terminus: NADPH-dependent 7-cyano-7-deazaguanine reductase (276 aa).

Residue I83–S85 coordinates substrate. S85 to K86 is a binding site for NADPH. The Thioimide intermediate role is filled by C184. Residue D191 is the Proton donor of the active site. Position 223–224 (H223–E224) interacts with substrate. R252–G253 contacts NADPH.

Belongs to the GTP cyclohydrolase I family. QueF type 2 subfamily. As to quaternary structure, homodimer.

The protein localises to the cytoplasm. The catalysed reaction is 7-aminomethyl-7-carbaguanine + 2 NADP(+) = 7-cyano-7-deazaguanine + 2 NADPH + 3 H(+). It functions in the pathway tRNA modification; tRNA-queuosine biosynthesis. Functionally, catalyzes the NADPH-dependent reduction of 7-cyano-7-deazaguanine (preQ0) to 7-aminomethyl-7-deazaguanine (preQ1). The chain is NADPH-dependent 7-cyano-7-deazaguanine reductase from Pseudomonas aeruginosa (strain ATCC 15692 / DSM 22644 / CIP 104116 / JCM 14847 / LMG 12228 / 1C / PRS 101 / PAO1).